Here is a 39-residue protein sequence, read N- to C-terminus: Photosystem II reaction center protein J (39 aa).

Residues 9–29 traverse the membrane as a helical segment; sequence LWIIATFGGIAALTVVGLFIY.

This sequence belongs to the PsbJ family. As to quaternary structure, PSII is composed of 1 copy each of membrane proteins PsbA, PsbB, PsbC, PsbD, PsbE, PsbF, PsbH, PsbI, PsbJ, PsbK, PsbL, PsbM, PsbT, PsbX, PsbY, PsbZ, Psb30/Ycf12, at least 3 peripheral proteins of the oxygen-evolving complex and a large number of cofactors. It forms dimeric complexes.

It is found in the plastid. It localises to the chloroplast thylakoid membrane. In terms of biological role, one of the components of the core complex of photosystem II (PSII). PSII is a light-driven water:plastoquinone oxidoreductase that uses light energy to abstract electrons from H(2)O, generating O(2) and a proton gradient subsequently used for ATP formation. It consists of a core antenna complex that captures photons, and an electron transfer chain that converts photonic excitation into a charge separation. The sequence is that of Photosystem II reaction center protein J from Guillardia theta (Cryptophyte).